The primary structure comprises 35 residues: Potassium channel toxin alpha-KTx 6.1 (35 aa).

4 cysteine pairs are disulfide-bonded: cysteine 4–cysteine 25, cysteine 10–cysteine 30, cysteine 14–cysteine 32, and cysteine 20–cysteine 35.

The protein belongs to the short scorpion toxin superfamily. Potassium channel inhibitor family. Alpha-KTx 06 subfamily. In terms of tissue distribution, expressed by the venom gland.

Its subcellular location is the secreted. Functionally, potently and reversibly inhibits the insect voltage-gated Shaker (Sh) potassium channel (isoform alpha (B)), the mammalian voltage-gated potassium channels Kv1.2/KCNA2 (IC(50)=0.44 nM), and the calcium-activated potassium channel KCa2.3/KCNN3 (Kd=330 nM). Its effect on Kv1.3/KCNA3 is controversial, since this channel is voltage-independently inhibited in PubMed:9464266, but is not affected in PubMed:10931199. Furthermore, this toxin competes with apamin (a small conductance calcium-activated potassium channel inhibitor) for binding to rat brain synaptosomes. In Pandinus imperator (Emperor scorpion), this protein is Potassium channel toxin alpha-KTx 6.1.